The sequence spans 264 residues: Thymidylate synthase (264 aa).

Residue R21 coordinates dUMP. H51 contacts (6R)-5,10-methylene-5,6,7,8-tetrahydrofolate. 126–127 (RR) contacts dUMP. The Nucleophile role is filled by C146. Residues 166–169 (RSAD), N177, and 207–209 (HLY) each bind dUMP. Residue D169 participates in (6R)-5,10-methylene-5,6,7,8-tetrahydrofolate binding. Position 263 (A263) interacts with (6R)-5,10-methylene-5,6,7,8-tetrahydrofolate.

This sequence belongs to the thymidylate synthase family. Bacterial-type ThyA subfamily. As to quaternary structure, homodimer.

Its subcellular location is the cytoplasm. It carries out the reaction dUMP + (6R)-5,10-methylene-5,6,7,8-tetrahydrofolate = 7,8-dihydrofolate + dTMP. It participates in pyrimidine metabolism; dTTP biosynthesis. Its function is as follows. Catalyzes the reductive methylation of 2'-deoxyuridine-5'-monophosphate (dUMP) to 2'-deoxythymidine-5'-monophosphate (dTMP) while utilizing 5,10-methylenetetrahydrofolate (mTHF) as the methyl donor and reductant in the reaction, yielding dihydrofolate (DHF) as a by-product. This enzymatic reaction provides an intracellular de novo source of dTMP, an essential precursor for DNA biosynthesis. The polypeptide is Thymidylate synthase (Legionella pneumophila subsp. pneumophila (strain Philadelphia 1 / ATCC 33152 / DSM 7513)).